A 227-amino-acid chain; its full sequence is Ureidoacrylate amidohydrolase RutB (227 aa).

Asp-22 functions as the Proton acceptor in the catalytic mechanism. The active site involves Lys-131. Cys-164 (nucleophile) is an active-site residue.

This sequence belongs to the isochorismatase family. RutB subfamily.

It catalyses the reaction (Z)-3-ureidoacrylate + H2O + H(+) = (Z)-3-aminoacrylate + NH4(+) + CO2. The enzyme catalyses (Z)-3-ureidoacrylate + H2O = (Z)-3-aminoacrylate + carbamate + H(+). The catalysed reaction is (Z)-2-methylureidoacrylate + H2O + H(+) = (Z)-2-methylaminoacrylate + NH4(+) + CO2. Functionally, hydrolyzes ureidoacrylate to form aminoacrylate and carbamate. The carbamate hydrolyzes spontaneously, thereby releasing one of the nitrogen atoms of the pyrimidine ring as ammonia and one of its carbon atoms as CO2. The sequence is that of Ureidoacrylate amidohydrolase RutB from Azorhizobium caulinodans (strain ATCC 43989 / DSM 5975 / JCM 20966 / LMG 6465 / NBRC 14845 / NCIMB 13405 / ORS 571).